The primary structure comprises 538 residues: Chaperonin GroEL 1 (538 aa).

ATP contacts are provided by residues T29–P32, D86–T90, G413, N478–A480, and D494.

This sequence belongs to the chaperonin (HSP60) family. Forms a cylinder of 14 subunits composed of two heptameric rings stacked back-to-back. Interacts with the co-chaperonin GroES.

It is found in the cytoplasm. It carries out the reaction ATP + H2O + a folded polypeptide = ADP + phosphate + an unfolded polypeptide.. In terms of biological role, together with its co-chaperonin GroES, plays an essential role in assisting protein folding. The GroEL-GroES system forms a nano-cage that allows encapsulation of the non-native substrate proteins and provides a physical environment optimized to promote and accelerate protein folding. The polypeptide is Chaperonin GroEL 1 (Corynebacterium glutamicum (strain R)).